The chain runs to 392 residues: Protein DJ-1 homolog A (392 aa).

PfpI endopeptidase domains lie at 6–174 (KTVL…EQLF) and 212–378 (PQIL…EKFY).

The protein belongs to the peptidase C56 family. As to quaternary structure, homodimer. Interacts with CSD1 and GPX2.

The protein localises to the cytoplasm. It is found in the cytosol. Its subcellular location is the nucleus. In terms of biological role, involved in oxidative stress response. Confers protection against diverse stresses by binding both CSD1 and GPX2 and mediating the cytosolic activation of the Cu-Zn-dependent superoxide dismutase activity of CSD1. This chain is Protein DJ-1 homolog A (DJ1A), found in Arabidopsis thaliana (Mouse-ear cress).